A 227-amino-acid chain; its full sequence is PKHD-type hydroxylase Bphy_5374 (227 aa).

The 101-residue stretch at 79–179 (KVYPPLFNRY…RVASFFWVQS (101 aa)) folds into the Fe2OG dioxygenase domain. Fe cation is bound by residues H97, D99, and H160. Position 170 (R170) interacts with 2-oxoglutarate.

Fe(2+) is required as a cofactor. L-ascorbate serves as cofactor.

This Paraburkholderia phymatum (strain DSM 17167 / CIP 108236 / LMG 21445 / STM815) (Burkholderia phymatum) protein is PKHD-type hydroxylase Bphy_5374.